A 436-amino-acid chain; its full sequence is Repulsive guidance molecule B (436 aa).

The first 48 residues, 1-48, serve as a signal peptide directing secretion; that stretch reads MGVRAAPSCAAAPAAAGAEQSRRPGLWPPSPPPPLLLLLLLSLGLLHA. N-linked (GlcNAc...) asparagine glycosylation occurs at Asn123. Intrachain disulfides connect Cys142–Cys229 and Cys166–Cys315. The N-linked (GlcNAc...) asparagine glycan is linked to Asn386. The GPI-anchor amidated cysteine moiety is linked to residue Cys415. Positions 416–436 are cleaved as a propeptide — removed in mature form; it reads GGCRDLPVGLGLTCLILIMFL.

This sequence belongs to the repulsive guidance molecule (RGM) family. In terms of assembly, homooligomer. Interacts with DRGX. Interacts with BMP2 and BMP4. Interacts with the BMP type I receptors ACVR1, BMPR1A and BMPR1B and with the BMP type II receptor ACVR2B. The functional complex with its receptor NEO1/neogenin appears to be a heterotetramer with a 2:2 stoichiometry, RGM molecules acting as staples that bring two NEO1 receptors together without interacting themselves, this arrangement leads to activation of downstream signaling via RhoA. Post-translationally, GPI-anchored. In terms of processing, autocatalytically cleaved at low pH; the two chains remain linked via two disulfide bonds. In terms of tissue distribution, detected in neonatal and adult dorsal root ganglion sensory neurons, spinal cord, and brain (at protein level). Also expressed at high levels in retinal ganglion cells of developing mouse, extending to the optic nerve (at protein level). Expressed in testis, epididymis, ovary, uterus, and pituitary.

The protein localises to the cell membrane. It is found in the membrane raft. In terms of biological role, member of the repulsive guidance molecule (RGM) family that contributes to the patterning of the developing nervous system. Acts as a bone morphogenetic protein (BMP) coreceptor that potentiates BMP signaling. Promotes neuronal adhesion. May inhibit neurite outgrowth. This is Repulsive guidance molecule B from Mus musculus (Mouse).